A 452-amino-acid polypeptide reads, in one-letter code: Retrograde protein of 51 kDa (452 aa).

Residues 1 to 13 show a composition bias toward basic and acidic residues; it reads MQKGAKIEDEGRQ. Residues 1–50 are disordered; that stretch reads MQKGAKIEDEGRQSRIQSRNFIIQRSDPRTRGSSVYSSRSSSYNVRSSIS. The interval 1–75 is head; it reads MQKGAKIEDE…KGNREKEKRE (75 aa). The span at 14–23 shows a compositional bias: polar residues; that stretch reads SRIQSRNFII. A compositionally biased stretch (low complexity) spans 33–50; that stretch reads SSVYSSRSSSYNVRSSIS. An IF rod domain is found at 72–424; the sequence is EKREMQNLNE…KLLEGEESRV (353 aa). Residues 76 to 111 form a coil 1A region; the sequence is MQNLNERLASYIEKVHFLDAQVKKLEAENEALRNRK. The linker 1 stretch occupies residues 112–121; it reads VEDLQPIRDA. A coil 1B region spans residues 122–259; the sequence is YENELRQARK…DLLDQLELLK (138 aa). Residue Ser156 is modified to Sulfoserine. The linker 12 stretch occupies residues 260-278; sequence PEPIQIKGMDYADFWKSEL. The coil 2 stretch occupies residues 279–424; the sequence is AKCVREINLA…KLLEGEESRV (146 aa). The tract at residues 425–452 is tail; it reads GLRTLVEQAIGTQSKGSASLKDAIQSSS.

It belongs to the intermediate filament family.

The chain is Retrograde protein of 51 kDa (RGP51) from Lymnaea stagnalis (Great pond snail).